A 113-amino-acid chain; its full sequence is Ribonuclease P protein component (113 aa).

It belongs to the RnpA family. In terms of assembly, consists of a catalytic RNA component (M1 or rnpB) and a protein subunit.

It catalyses the reaction Endonucleolytic cleavage of RNA, removing 5'-extranucleotides from tRNA precursor.. Its function is as follows. RNaseP catalyzes the removal of the 5'-leader sequence from pre-tRNA to produce the mature 5'-terminus. It can also cleave other RNA substrates such as 4.5S RNA. The protein component plays an auxiliary but essential role in vivo by binding to the 5'-leader sequence and broadening the substrate specificity of the ribozyme. This Geotalea uraniireducens (strain Rf4) (Geobacter uraniireducens) protein is Ribonuclease P protein component.